We begin with the raw amino-acid sequence, 1407 residues long: DNA-directed RNA polymerase subunit beta' (1407 aa).

Zn(2+) contacts are provided by Cys70, Cys72, Cys85, and Cys88. Mg(2+) contacts are provided by Asp460, Asp462, and Asp464. The Zn(2+) site is built by Cys814, Cys888, Cys895, and Cys898.

The protein belongs to the RNA polymerase beta' chain family. In terms of assembly, the RNAP catalytic core consists of 2 alpha, 1 beta, 1 beta' and 1 omega subunit. When a sigma factor is associated with the core the holoenzyme is formed, which can initiate transcription. Mg(2+) is required as a cofactor. Requires Zn(2+) as cofactor.

The enzyme catalyses RNA(n) + a ribonucleoside 5'-triphosphate = RNA(n+1) + diphosphate. Its function is as follows. DNA-dependent RNA polymerase catalyzes the transcription of DNA into RNA using the four ribonucleoside triphosphates as substrates. This Citrobacter koseri (strain ATCC BAA-895 / CDC 4225-83 / SGSC4696) protein is DNA-directed RNA polymerase subunit beta'.